Consider the following 88-residue polypeptide: UPF0297 protein str1959 (88 aa).

The protein belongs to the UPF0297 family.

The sequence is that of UPF0297 protein str1959 from Streptococcus thermophilus (strain CNRZ 1066).